The primary structure comprises 513 residues: Lysine--tRNA ligase (513 aa).

Residues Glu422 and Glu429 each coordinate Mg(2+).

This sequence belongs to the class-II aminoacyl-tRNA synthetase family. As to quaternary structure, homodimer. Mg(2+) serves as cofactor.

It localises to the cytoplasm. The enzyme catalyses tRNA(Lys) + L-lysine + ATP = L-lysyl-tRNA(Lys) + AMP + diphosphate. The sequence is that of Lysine--tRNA ligase from Tolumonas auensis (strain DSM 9187 / NBRC 110442 / TA 4).